A 400-amino-acid chain; its full sequence is MLLEAELDCHRERPGAPGASALCTFSRTPEIPMCAGCDQHILDRFILKALDRHWHSKCLKCSDCHVPLAERCFSRGESVYCKDDFFKRFGTKCAACQLGIPPTQVVRRAQDFVYHLHCFACVVCKRQLATGDEFYLMEDSRLVCKADYETAKQREAEATAKRPRTTITAKQLETLKSAYNTSPKPARHVREQLSSETGLDMRVVQVWFQNRRAKEKRLKKDAGRQRWGQYFRNMKRSRGSSKSDKDSIQEGQDSDAEVSFTDEPSMADMGPANGLYSSLGEPAPALGRPVGGLGSFTLDHGGLTGPEQYRELRPGSPYGIPPSPAAPQSLPGPQPLLSSLVYPDTNLSLVPSGPPGGPPPMRVLAGNGPSSDLSTESSSGYPDFPASPASWLDEVDHAQF.

2 LIM zinc-binding domains span residues 34–84 (CAGC…CKDD) and 93–147 (CAAC…CKAD). S74 carries the post-translational modification Phosphoserine. The segment at residues 160–219 (AKRPRTTITAKQLETLKSAYNTSPKPARHVREQLSSETGLDMRVVQVWFQNRRAKEKRLK) is a DNA-binding region (homeobox). 2 disordered regions span residues 215-280 (EKRL…SSLG) and 297-400 (TLDH…HAQF). Phosphotyrosine is present on Y230. 2 positions are modified to phosphoserine: S237 and S241. Pro residues-rich tracts occupy residues 319 to 334 (GIPP…PGPQ) and 352 to 361 (SGPPGGPPPM). Over residues 368–380 (GPSSDLSTESSSG) the composition is skewed to polar residues.

As to quaternary structure, interacts with POU1F1. At neuronal promoters, interacts with LDB1, in motor neurons LDB1 is displaced by ISL1 and a ternary complex is formed in which ISL1 contacts both LHX3 and LDB1; allosteric structural changes in the DNA binding domain of LHX3, induced by the ISL1-LHX3 interaction, may explain differences in sequence specificity of the different complexes. Interacts with LDB2. May interact with CITED2/MRG1. As to expression, mostly expressed in the pituitary anterior and intermediate lobes. It is also expressed in the pineal gland and transiently in the primordia of motor neurons including the spinal cord, pons and medulla oblongata.

Its subcellular location is the nucleus. Transcription factor. Recognizes and binds to the consensus sequence motif 5'-AATTAATTA-3' in the regulatory elements of target genes, such as glycoprotein hormones alpha chain CGA and visual system homeobox CHX10, positively modulating transcription; transcription can be co-activated by LDB2. Synergistically enhances transcription from the prolactin promoter in cooperation with POU1F1/Pit-1. Required for the establishment of the specialized cells of the pituitary gland and the nervous system. Involved in the development of interneurons and motor neurons in cooperation with LDB1 and ISL1. The chain is LIM/homeobox protein Lhx3 (Lhx3) from Mus musculus (Mouse).